The primary structure comprises 264 residues: Small ribosomal subunit protein eS1 (264 aa).

Residues 236–255 (GEGGSGKRGEAGDKSERPEG) show a composition bias toward basic and acidic residues. Residues 236 to 264 (GEGGSGKRGEAGDKSERPEGYEPPVQESV) are disordered.

The protein belongs to the eukaryotic ribosomal protein eS1 family. As to quaternary structure, component of the small ribosomal subunit. Mature ribosomes consist of a small (40S) and a large (60S) subunit. The 40S subunit contains about 33 different proteins and 1 molecule of RNA (18S). The 60S subunit contains about 49 different proteins and 3 molecules of RNA (28S, 5.8S and 5S).

Its subcellular location is the cytoplasm. In Spodoptera frugiperda (Fall armyworm), this protein is Small ribosomal subunit protein eS1.